The following is a 281-amino-acid chain: Penicillin-insensitive murein endopeptidase (281 aa).

Positions 1 to 24 are cleaved as a signal peptide; that stretch reads MKQGLIGVLALALGATLLSSAVWA. 3 disulfides stabilise this stretch: C49–C270, C192–C240, and C221–C228. Residues H115, H118, D125, and H216 each coordinate Zn(2+). The interval 230-271 is disordered; sequence EQSEPPIGDGCGAELTSWFQPKQPSSEAPEKTTPPPLPPSCQ. The span at 246-255 shows a compositional bias: polar residues; the sequence is SWFQPKQPSS.

It belongs to the peptidase M74 family. As to quaternary structure, dimer. Zn(2+) is required as a cofactor.

The protein resides in the periplasm. Its function is as follows. Murein endopeptidase that cleaves the D-alanyl-meso-2,6-diamino-pimelyl amide bond that connects peptidoglycan strands. Likely plays a role in the removal of murein from the sacculus. The polypeptide is Penicillin-insensitive murein endopeptidase (mepA) (Pectobacterium atrosepticum (strain SCRI 1043 / ATCC BAA-672) (Erwinia carotovora subsp. atroseptica)).